Here is a 258-residue protein sequence, read N- to C-terminus: C4b-binding protein beta chain (258 aa).

The N-terminal stretch at 1-15 is a signal peptide; sequence MLCLVVCCLIWLISA. The 58-residue stretch at 18–75 folds into the Sushi 1; atypical; lacks a Cys domain; the sequence is GSCSEPPPVNNSVFVGKETEEQILGIYLCIKGYHLVGKKSLVFDPSKEWNSTLPECLL. 5 N-linked (GlcNAc...) asparagine glycosylation sites follow: Asn-27, Asn-67, Asn-89, Asn-95, and Asn-114. Intrachain disulfides connect Cys-46–Cys-73, Cys-78–Cys-118, Cys-104–Cys-131, Cys-136–Cys-176, and Cys-162–Cys-188. 2 Sushi domains span residues 76-133 and 134-190; these read GHCP…ICRS and RDCE…TCES. Residue Asn-218 is glycosylated (N-linked (GlcNAc...) asparagine).

In terms of assembly, disulfide-linked complex of alpha and beta chains.

The protein resides in the secreted. Functionally, controls the classical pathway of complement activation. It binds as a cofactor to C3b/C4b inactivator (C3bINA), which then hydrolyzes the complement fragment C4b. It also accelerates the degradation of the C4bC2a complex (C3 convertase) by dissociating the complement fragment C2a. It also interacts with anticoagulant protein S and with serum amyloid P component. In Rattus norvegicus (Rat), this protein is C4b-binding protein beta chain (C4bpb).